Reading from the N-terminus, the 238-residue chain is Enoyl-CoA delta isomerase 3 (238 aa).

It belongs to the enoyl-CoA hydratase/isomerase family.

The protein localises to the cytoplasm. The protein resides in the nucleus. The enzyme catalyses a (3Z)-enoyl-CoA = a 4-saturated (2E)-enoyl-CoA. The catalysed reaction is a (3E)-enoyl-CoA = a 4-saturated (2E)-enoyl-CoA. Its pathway is lipid metabolism; fatty acid beta-oxidation. In terms of biological role, able to isomerize both 3-cis and 3-trans double bonds into the 2-trans form in a range of enoyl-CoA species. Essential for the beta oxidation of unsaturated fatty acids. The polypeptide is Enoyl-CoA delta isomerase 3 (Arabidopsis thaliana (Mouse-ear cress)).